Consider the following 312-residue polypeptide: Zinc-finger homeodomain protein 4 (312 aa).

The disordered stretch occupies residues 20–74; sequence GGGGSHGHMIHHHDHHAANSAPPTHNNNNTTQPPPMPLHGNGHGNNYDHHHHQDP. Positions 37–50 are enriched in low complexity; the sequence is ANSAPPTHNNNNTT. The ZF-HD dimerization-type; degenerate zinc-finger motif lies at 90–139; sequence YKECLKNHAAAMGGNATDGCGEFMPSGEDGSIEALTCSACNCHRNFHRKE. Residues 218–281 constitute a DNA-binding region (homeobox); that stretch reads KKRFRTKFTP…NNKIHFSKKN (64 aa).

In terms of assembly, homo- and heterodimer with other ZFHD proteins. Interacts with ZHD1, ZHD2, ZHD5, ZHD7, ZHD8, ZHD10 and ZHD11. Mostly expressed in flowers and inflorescence.

Its subcellular location is the nucleus. Its function is as follows. Putative transcription factor. Probably involved in the regulation of floral induction. The polypeptide is Zinc-finger homeodomain protein 4 (ZHD4) (Arabidopsis thaliana (Mouse-ear cress)).